A 1358-amino-acid chain; its full sequence is Phosphoinositide 3-kinase regulatory subunit 4 (1358 aa).

Gly-2 carries N-myristoyl glycine lipidation. The region spanning 26–324 (FEYDKSLGST…AFPEIFYTFL (299 aa)) is the Protein kinase domain. ATP-binding positions include 32–40 (LGSTRFFKV) and Lys-53. Asp-148 acts as the Proton acceptor in catalysis. 4 HEAT repeats span residues 413–450 (ILLD…LVQE), 458–495 (IYPE…TALR), 572–610 (KAND…YVGW), and 612–648 (SSSI…LGLL). 4 positions are modified to phosphoserine: Ser-808, Ser-813, Ser-853, and Ser-865. WD repeat units follow at residues 991–1030 (EHKS…GKTT), 1040–1079 (RIGG…LPKS), 1093–1134 (KEDG…NAWT), 1139–1178 (LKSG…PISS), 1182–1223 (PSRA…RRLT), and 1237–1278 (PSPH…RSYV). Residues 1307-1326 (KQKVGPSDDTPRRGPESLPV) are disordered. The segment covering 1315–1326 (DTPRRGPESLPV) has biased composition (basic and acidic residues). The residue at position 1316 (Thr-1316) is a Phosphothreonine. Residues 1327–1358 (GHHDIITDIATFQTTQGFIVTASRDGIVKVWK) form a WD 7 repeat.

The protein belongs to the protein kinase superfamily. Ser/Thr protein kinase family. Component of the PI3K (PI3KC3/PI3K-III/class III phosphatidylinositol 3-kinase) complex the core of which is composed of the catalytic subunit PIK3C3, the regulatory subunit PIK3R4 and BECN1 associating with additional regulatory/auxiliary subunits to form alternative complex forms. Alternative complex forms containing a fourth regulatory subunit in a mutually exclusive manner are PI3K complex I (PI3KC3-C1) containing ATG14, and PI3K complex II (PI3KC3-C2) containing UVRAG. PI3KC3-C1 displays a V-shaped architecture with PIK3R4 serving as a bridge between PIK3C3 and the ATG14:BECN1 subcomplex. Both, PI3KC3-C1 and PI3KC3-C2, can associate with further regulatory subunits, such as RUBCN, SH3GLB1/Bif-1, AMBRA1 and NRBF2. PI3KC3-C1 probably associates with PIK3CB. Interacts with RAB7A in the presence of PIK3C3/VPS34. Interacts with NRBF2. Interacts with ARMC3. The cofactor is Mn(2+). Myristoylated. In terms of processing, probably autophosphorylated.

It is found in the late endosome. It localises to the cytoplasmic vesicle. The protein localises to the autophagosome. Its subcellular location is the membrane. The catalysed reaction is L-seryl-[protein] + ATP = O-phospho-L-seryl-[protein] + ADP + H(+). It carries out the reaction L-threonyl-[protein] + ATP = O-phospho-L-threonyl-[protein] + ADP + H(+). Functionally, regulatory subunit of the PI3K complex that mediates formation of phosphatidylinositol 3-phosphate; different complex forms are believed to play a role in multiple membrane trafficking pathways: PI3KC3-C1 is involved in initiation of autophagosomes and PI3KC3-C2 in maturation of autophagosomes and endocytosis. Involved in regulation of degradative endocytic trafficking and cytokinesis, probably in the context of PI3KC3-C2. This Mus musculus (Mouse) protein is Phosphoinositide 3-kinase regulatory subunit 4 (Pik3r4).